The primary structure comprises 152 residues: Large-conductance mechanosensitive channel (152 aa).

3 helical membrane-spanning segments follow: residues 21–41 (IDLA…DSLV), 44–64 (VVMP…NKFL), and 92–112 (GNFI…FWMV).

The protein belongs to the MscL family. As to quaternary structure, homopentamer.

It localises to the cell inner membrane. In terms of biological role, channel that opens in response to stretch forces in the membrane lipid bilayer. May participate in the regulation of osmotic pressure changes within the cell. This chain is Large-conductance mechanosensitive channel, found in Bordetella pertussis (strain Tohama I / ATCC BAA-589 / NCTC 13251).